The following is a 354-amino-acid chain: UDP-3-O-acylglucosamine N-acyltransferase (354 aa).

The active-site Proton acceptor is the His258.

It belongs to the transferase hexapeptide repeat family. LpxD subfamily. As to quaternary structure, homotrimer.

The catalysed reaction is a UDP-3-O-[(3R)-3-hydroxyacyl]-alpha-D-glucosamine + a (3R)-hydroxyacyl-[ACP] = a UDP-2-N,3-O-bis[(3R)-3-hydroxyacyl]-alpha-D-glucosamine + holo-[ACP] + H(+). The protein operates within bacterial outer membrane biogenesis; LPS lipid A biosynthesis. Its function is as follows. Catalyzes the N-acylation of UDP-3-O-acylglucosamine using 3-hydroxyacyl-ACP as the acyl donor. Is involved in the biosynthesis of lipid A, a phosphorylated glycolipid that anchors the lipopolysaccharide to the outer membrane of the cell. The polypeptide is UDP-3-O-acylglucosamine N-acyltransferase (Sinorhizobium medicae (strain WSM419) (Ensifer medicae)).